Here is a 289-residue protein sequence, read N- to C-terminus: Protease HtpX homolog (289 aa).

2 helical membrane passes run 11-31 (AALFGVLWAVLLALGALIGAG) and 36-54 (APIWIMALVGVGTTFYGYW). His138 contacts Zn(2+). Glu139 is an active-site residue. His142 is a binding site for Zn(2+). 2 helical membrane passes run 153–173 (VAAAVAGVITSVGQMLLFFGG) and 182–202 (LAMIAMALLAPFAASLIQMAI). Glu207 contacts Zn(2+).

The protein belongs to the peptidase M48B family. Zn(2+) serves as cofactor.

It is found in the cell membrane. This is Protease HtpX homolog from Pseudarthrobacter chlorophenolicus (strain ATCC 700700 / DSM 12829 / CIP 107037 / JCM 12360 / KCTC 9906 / NCIMB 13794 / A6) (Arthrobacter chlorophenolicus).